A 524-amino-acid chain; its full sequence is Ribonuclease Y (524 aa).

The helical transmembrane segment at 3-23 (IVINLLLLVLAALVAFVAGFF) threads the bilayer. Positions 214-280 (ALSVVHIQSD…KLTLKKLLAD (67 aa)) constitute a KH domain. The 93-residue stretch at 340 to 432 (LLQHSREVAM…VDAANTISLS (93 aa)) folds into the HD domain.

Belongs to the RNase Y family.

It is found in the cell membrane. Functionally, endoribonuclease that initiates mRNA decay. This is Ribonuclease Y from Chlorobium chlorochromatii (strain CaD3).